A 757-amino-acid polypeptide reads, in one-letter code: Endonuclease MutS2 (757 aa).

Position 321-328 (321-328) interacts with ATP; it reads GPNMGGKT. The Smr domain maps to 681–756; sequence IDIRGMTVEE…GTGVTVVEVK (76 aa).

The protein belongs to the DNA mismatch repair MutS family. MutS2 subfamily. In terms of assembly, homodimer. Binds to stalled ribosomes, contacting rRNA.

Endonuclease that is involved in the suppression of homologous recombination and thus may have a key role in the control of bacterial genetic diversity. Its function is as follows. Acts as a ribosome collision sensor, splitting the ribosome into its 2 subunits. Detects stalled/collided 70S ribosomes which it binds and splits by an ATP-hydrolysis driven conformational change. Acts upstream of the ribosome quality control system (RQC), a ribosome-associated complex that mediates the extraction of incompletely synthesized nascent chains from stalled ribosomes and their subsequent degradation. Probably generates substrates for RQC. The sequence is that of Endonuclease MutS2 from Thermotoga petrophila (strain ATCC BAA-488 / DSM 13995 / JCM 10881 / RKU-1).